Here is a 377-residue protein sequence, read N- to C-terminus: F-box protein At4g00755 (377 aa).

The F-box domain maps to 7–47; sequence LDTDTSLSILSCLDDPSDIVRASAVSRSWRQFVVKYSLSKN.

In Arabidopsis thaliana (Mouse-ear cress), this protein is F-box protein At4g00755.